The primary structure comprises 180 residues: uncharacterized protein (180 aa).

Transmembrane regions (helical) follow at residues 37 to 59 and 128 to 147; these read VLHAAAAVTEYAFVLSTLVFPSF and AGSATLFAGAAGAALRVLFV.

The protein resides in the cell membrane. This is an uncharacterized protein from Treponema pallidum (strain Nichols).